The sequence spans 424 residues: MYPYSDADAFRRQPERAKSSQLRTSAVDTRSAFARDRARVLHSAALRRLADKTQVVGPNDGDTPRTRLTHSLEVAQIARGIGAGLDLDPDLCDLAGLCHDIGHPPYGHNGENALNEVAAACGGFEGNAQTLRILTRLEPKIVSDEGESFGLNLSRAALDAACKYPWAKTNADGSVNKKYSAYDEDAEILAWIRQGHEDLRPPIEAQVMDFSDDIAYSVHDVEDGIVSGRIDLKVLWDLVELAALADKGAAAFGGSPAELIEGAASLRELPVVAAAADFDFSLRSYAALKAMTSELVGRYVGSTIESTKKTHAGIDVGRMHGDLIIPETAASEVKLLKTLAVLYVMDDPGHLARQNRQRDRIFRVFDYLVLGAPGSLDPMYRQWFIEADSESEQIRVIVDQIASMTESRLERLARNAADISGFLG.

The interval 1 to 27 is disordered; sequence MYPYSDADAFRRQPERAKSSQLRTSAV. Positions 8–18 are enriched in basic and acidic residues; sequence DAFRRQPERAK. The 151-residue stretch at 67–217 folds into the HD domain; sequence RLTHSLEVAQ…MDFSDDIAYS (151 aa).

This sequence belongs to the dGTPase family. Type 2 subfamily.

The sequence is that of Deoxyguanosinetriphosphate triphosphohydrolase-like protein (dgt) from Corynebacterium glutamicum (strain ATCC 13032 / DSM 20300 / JCM 1318 / BCRC 11384 / CCUG 27702 / LMG 3730 / NBRC 12168 / NCIMB 10025 / NRRL B-2784 / 534).